Here is a 149-residue protein sequence, read N- to C-terminus: Large ribosomal subunit protein uL11 (149 aa).

The protein belongs to the universal ribosomal protein uL11 family. Part of the ribosomal stalk of the 50S ribosomal subunit. Interacts with L10 and the large rRNA to form the base of the stalk. L10 forms an elongated spine to which L12 dimers bind in a sequential fashion forming a multimeric L10(L12)X complex. In terms of processing, one or more lysine residues are methylated.

Its function is as follows. Forms part of the ribosomal stalk which helps the ribosome interact with GTP-bound translation factors. This chain is Large ribosomal subunit protein uL11, found in Methylobacterium radiotolerans (strain ATCC 27329 / DSM 1819 / JCM 2831 / NBRC 15690 / NCIMB 10815 / 0-1).